The sequence spans 211 residues: Uracil phosphoribosyltransferase (211 aa).

5-phospho-alpha-D-ribose 1-diphosphate contacts are provided by residues arginine 78, arginine 103, and 130 to 138; that span reads DPMLATGGT. Residues isoleucine 195 and 200–202 each bind uracil; that span reads GDA. Aspartate 201 provides a ligand contact to 5-phospho-alpha-D-ribose 1-diphosphate.

It belongs to the UPRTase family. Mg(2+) is required as a cofactor.

The enzyme catalyses UMP + diphosphate = 5-phospho-alpha-D-ribose 1-diphosphate + uracil. It participates in pyrimidine metabolism; UMP biosynthesis via salvage pathway; UMP from uracil: step 1/1. Its activity is regulated as follows. Allosterically activated by GTP. In terms of biological role, catalyzes the conversion of uracil and 5-phospho-alpha-D-ribose 1-diphosphate (PRPP) to UMP and diphosphate. The protein is Uracil phosphoribosyltransferase of Streptomyces avermitilis (strain ATCC 31267 / DSM 46492 / JCM 5070 / NBRC 14893 / NCIMB 12804 / NRRL 8165 / MA-4680).